The sequence spans 179 residues: Large ribosomal subunit protein uL5 (179 aa).

The protein belongs to the universal ribosomal protein uL5 family. Part of the 50S ribosomal subunit; part of the 5S rRNA/L5/L18/L25 subcomplex. Contacts the 5S rRNA and the P site tRNA. Forms a bridge to the 30S subunit in the 70S ribosome.

Functionally, this is one of the proteins that bind and probably mediate the attachment of the 5S RNA into the large ribosomal subunit, where it forms part of the central protuberance. In the 70S ribosome it contacts protein S13 of the 30S subunit (bridge B1b), connecting the 2 subunits; this bridge is implicated in subunit movement. Contacts the P site tRNA; the 5S rRNA and some of its associated proteins might help stabilize positioning of ribosome-bound tRNAs. This is Large ribosomal subunit protein uL5 from Prochlorococcus marinus (strain SARG / CCMP1375 / SS120).